A 186-amino-acid chain; its full sequence is uncharacterized protein (186 aa).

Positions 1 to 18 (MKKFFFAAALVVSGLLVG) are cleaved as a signal peptide. Cysteine 19 carries N-palmitoyl cysteine lipidation. Cysteine 19 carries the S-diacylglycerol cysteine lipid modification.

It is found in the cell membrane. This is an uncharacterized protein from Salmonella typhimurium (strain LT2 / SGSC1412 / ATCC 700720).